A 730-amino-acid polypeptide reads, in one-letter code: MAEQGAGGDGHRGGDGATHSDPASDGYKVQEKRTAPSRPTSTVSGQTSNHSGNKPDPPPVLRVDDRQRLARERREEREKQLAARETVWLEREERARQHYERHLEARKKKLEDQRLKEERRRAAVEEKRRQRLEEDKERHEAVVRRTMERSQKPRQKSNRWSWGSPLHGSSSIHSGDPDRRSVSTMNLSKHVDPVISKRLSSSSATLLNSPDRARRLQLSPWESSVVSRLLTPTHSFLARSKSTAALSGDTASCSPIIMPFKAAHSRNPVDRPKLFVTPPEGSARRRTIHGLASHKREREREHVPFHVSPGARRTLSPSNLKARSPAPARLWLPSKSMPHLPGTPRPASSLPPGSVRAASAQAPSSSPGNIRPFKREVKVEPEKKDPLPAVKSRVPLVKVEEVTVEEGTPVKPPEPAAPASAPIATPAPAPATDPAPVPAPSSTVTVGVVPKTSAGTTDPEEATRLLAEKRRLAREQREKEERERKEKEELERQKIEELARRVAEERSRREEEARRLEEEQAREKEELALRLAEEERERWEREEVERVQKQKEEEARAREEAERARQEREKHFQKEEQERLERKKRLEEIMRRTRRTETADKKTTEQRNGDIAKGVLTGEPEVPALPCMASSGNGESAESPHGVALQQSEVTTESSPDLEKQPNENGMSIQNENFEEVINLPVGSKASRLDVTNENPEIPLKPILAFNDEGTLGPLPQVDGVQTQQTAEVI.

The disordered stretch occupies residues 1-183 (MAEQGAGGDG…SGDPDRRSVS (183 aa)). Residue A2 is modified to N-acetylalanine. Residues 37–52 (SRPTSTVSGQTSNHSG) are compositionally biased toward polar residues. Residues 62–151 (RVDDRQRLAR…VVRRTMERSQ (90 aa)) are compositionally biased toward basic and acidic residues. The stretch at 89–152 (LEREERARQH…VRRTMERSQK (64 aa)) forms a coiled coil. 6 positions are modified to phosphoserine: S161, S183, S200, S202, S209, and S219. Phosphothreonine is present on T231. 2 positions are modified to phosphoserine: S235 and S254. K273 is covalently cross-linked (Glycyl lysine isopeptide (Lys-Gly) (interchain with G-Cter in SUMO2)). Phosphothreonine is present on T277. S282 carries the phosphoserine modification. Residues 291-388 (LASHKRERER…VEPEKKDPLP (98 aa)) form a disordered region. Residues 294-304 (HKREREREHVP) are compositionally biased toward basic and acidic residues. Residue K295 forms a Glycyl lysine isopeptide (Lys-Gly) (interchain with G-Cter in SUMO2) linkage. S336 and S366 each carry phosphoserine. A compositionally biased stretch (low complexity) spans 357 to 367 (AASAQAPSSSP). A compositionally biased stretch (basic and acidic residues) spans 373 to 386 (FKREVKVEPEKKDP). Residues K374, K378, and K398 each participate in a glycyl lysine isopeptide (Lys-Gly) (interchain with G-Cter in SUMO2) cross-link. Residues 403–669 (TVEEGTPVKP…KQPNENGMSI (267 aa)) are disordered. Residues 425-439 (TPAPAPATDPAPVPA) show a composition bias toward pro residues. Over residues 440 to 453 (PSSTVTVGVVPKTS) the composition is skewed to low complexity. Residues 460–589 (EEATRLLAEK…LERKKRLEEI (130 aa)) adopt a coiled-coil conformation. The span at 461–610 (EATRLLAEKR…KKTTEQRNGD (150 aa)) shows a compositional bias: basic and acidic residues. A compositionally biased stretch (polar residues) spans 645-655 (LQQSEVTTESS).

Belongs to the MAP7 family. In terms of assembly, interacts with TRPV4. Post-translationally, the association with microtubules is regulated by phosphorylation during the cell cycle. During interphase only phosphorylated on serine. Phosphorylated on threonine in mitosis. Highly expressed in the epithelial cells of the kidney tubules and in the absorptive cells of the intestine, and widely distributed in the testis. Expression correlates with the differentiation of certain epithelial cell types: in the adult intestine, more abundantly expressed in the differentiating than in the proliferative cell compartment. The expression clearly correlates with the degree of cellular apicobasal polarity. Expressed in lung, kidney, brain and fat. Colocalized with TRPV4 in ependymal cells, in the choroid plexus, in bronchial and renal cortical tubular cells. Widely expressed in excitable neuronal cells, vascular cells as well as in epithelial cells. In seminiferous epithelium, associated with the microtubule of the spermatid manchette.

The protein resides in the cytoplasm. It localises to the perinuclear region. Its subcellular location is the basolateral cell membrane. The protein localises to the cytoskeleton. Microtubule-stabilizing protein that may play an important role during reorganization of microtubules during polarization and differentiation of epithelial cells. Associates with microtubules in a dynamic manner. May play a role in the formation of intercellular contacts. Colocalization with TRPV4 results in the redistribution of TRPV4 toward the membrane and may link cytoskeletal microfilaments. The polypeptide is Ensconsin (Map7) (Mus musculus (Mouse)).